A 98-amino-acid polypeptide reads, in one-letter code: Co-chaperonin GroES (98 aa).

The protein belongs to the GroES chaperonin family. In terms of assembly, heptamer of 7 subunits arranged in a ring. Interacts with the chaperonin GroEL.

Its subcellular location is the cytoplasm. Functionally, together with the chaperonin GroEL, plays an essential role in assisting protein folding. The GroEL-GroES system forms a nano-cage that allows encapsulation of the non-native substrate proteins and provides a physical environment optimized to promote and accelerate protein folding. GroES binds to the apical surface of the GroEL ring, thereby capping the opening of the GroEL channel. This is Co-chaperonin GroES from Brucella abortus (strain S19).